We begin with the raw amino-acid sequence, 140 residues long: Relaxin-3 (140 aa).

An N-terminal signal peptide occupies residues 1–26; the sequence is MAKRPLLLLLLAVWVLAGELWLRTEA. 3 cysteine pairs are disulfide-bonded: C36/C127, C48/C140, and C126/C131. Positions 56–116 are cleaved as a propeptide — connecting peptide; sequence SDMLAHEALG…RTPGALRGSR (61 aa).

This sequence belongs to the insulin family. Heterodimer of a B chain and an A chain linked by two disulfide bonds.

It is found in the secreted. In terms of biological role, may play a role in neuropeptide signaling processes. Ligand for LGR7, RXFP3 and RXFP4. The chain is Relaxin-3 (RLN3) from Sus scrofa (Pig).